An 831-amino-acid chain; its full sequence is Periplasmic nitrate reductase (831 aa).

Residues Met1–Ala29 constitute a signal peptide (tat-type signal). Residues Ile41 to Asp97 form the 4Fe-4S Mo/W bis-MGD-type domain. Residues Cys48, Cys51, Cys55, and Cys83 each coordinate [4Fe-4S] cluster. Residues Lys85, Gln152, Asn177, Cys181, Trp214–Met221, Ser245–His249, Gln264–Asp266, Met374, Gln378, Asn484, Ser510–Asp511, Lys533, Asp560, and Thr720–Ser729 each bind Mo-bis(molybdopterin guanine dinucleotide). Trp796 contacts substrate. Positions 804 and 821 each coordinate Mo-bis(molybdopterin guanine dinucleotide).

The protein belongs to the prokaryotic molybdopterin-containing oxidoreductase family. NasA/NapA/NarB subfamily. As to quaternary structure, component of the periplasmic nitrate reductase NapAB complex composed of NapA and NapB. It depends on [4Fe-4S] cluster as a cofactor. The cofactor is Mo-bis(molybdopterin guanine dinucleotide). Predicted to be exported by the Tat system. The position of the signal peptide cleavage has not been experimentally proven.

The protein resides in the periplasm. It carries out the reaction 2 Fe(II)-[cytochrome] + nitrate + 2 H(+) = 2 Fe(III)-[cytochrome] + nitrite + H2O. Functionally, catalytic subunit of the periplasmic nitrate reductase complex NapAB. Receives electrons from NapB and catalyzes the reduction of nitrate to nitrite. The chain is Periplasmic nitrate reductase from Psychromonas ingrahamii (strain DSM 17664 / CCUG 51855 / 37).